A 475-amino-acid chain; its full sequence is tRNA-2-methylthio-N(6)-dimethylallyladenosine synthase (475 aa).

Residues 1-10 are compositionally biased toward basic and acidic residues; that stretch reads MHETTLKREG. Residues 1–25 form a disordered region; that stretch reads MHETTLKREGASTPSNPTPSTHAAG. Polar residues predominate over residues 12–23; the sequence is STPSNPTPSTHA. Residues 27-144 enclose the MTTase N-terminal domain; it reads GKIYIRTFGC…LPELIRRRRD (118 aa). Residues Cys36, Cys73, Cys107, Cys181, Cys185, and Cys188 each contribute to the [4Fe-4S] cluster site. In terms of domain architecture, Radical SAM core spans 167-400; it reads RVEGATAFVS…QALINEQAAA (234 aa). Residues 403–466 form the TRAM domain; sequence QSMVGTRQRL…TNSLRGRVAG (64 aa).

This sequence belongs to the methylthiotransferase family. MiaB subfamily. As to quaternary structure, monomer. [4Fe-4S] cluster is required as a cofactor.

The protein localises to the cytoplasm. It catalyses the reaction N(6)-dimethylallyladenosine(37) in tRNA + (sulfur carrier)-SH + AH2 + 2 S-adenosyl-L-methionine = 2-methylsulfanyl-N(6)-dimethylallyladenosine(37) in tRNA + (sulfur carrier)-H + 5'-deoxyadenosine + L-methionine + A + S-adenosyl-L-homocysteine + 2 H(+). Its function is as follows. Catalyzes the methylthiolation of N6-(dimethylallyl)adenosine (i(6)A), leading to the formation of 2-methylthio-N6-(dimethylallyl)adenosine (ms(2)i(6)A) at position 37 in tRNAs that read codons beginning with uridine. The protein is tRNA-2-methylthio-N(6)-dimethylallyladenosine synthase of Bordetella avium (strain 197N).